We begin with the raw amino-acid sequence, 459 residues long: uncharacterized protein (459 aa).

The region spanning Pro-5 to Lys-63 is the TRAM domain. 4 residues coordinate [4Fe-4S] cluster: Cys-76, Cys-82, Cys-85, and Cys-166. Residues Gln-290, Tyr-319, Asp-340, and Asp-388 each coordinate S-adenosyl-L-methionine. Catalysis depends on Cys-415, which acts as the Nucleophile.

This sequence belongs to the class I-like SAM-binding methyltransferase superfamily. RNA M5U methyltransferase family.

This is an uncharacterized protein from Listeria monocytogenes serovar 1/2a (strain ATCC BAA-679 / EGD-e).